Reading from the N-terminus, the 151-residue chain is Large-conductance mechanosensitive channel (151 aa).

The next 2 membrane-spanning stretches (helical) occupy residues 12 to 32 (GNIVDLAVAVVIGTAFTALVT) and 71 to 91 (VLLSATINFILVAGVVYFLVV). The disordered stretch occupies residues 125-151 (NSNSSGRHEAPGTAGTPPPNYGPRADT).

It belongs to the MscL family. In terms of assembly, homopentamer.

It localises to the cell membrane. Channel that opens in response to stretch forces in the membrane lipid bilayer. May participate in the regulation of osmotic pressure changes within the cell. The protein is Large-conductance mechanosensitive channel of Mycobacterium ulcerans (strain Agy99).